Reading from the N-terminus, the 164-residue chain is Peptidyl-prolyl cis-trans isomerase A (164 aa).

Met-1 carries the post-translational modification N-acetylmethionine. Position 2 is an N-acetylvaline; in Peptidyl-prolyl cis-trans isomerase A, N-terminally processed (Val-2). In terms of domain architecture, PPIase cyclophilin-type spans 7-163; sequence FFDITADGEP…KKITISDCGQ (157 aa). N6-acetyllysine; alternate is present on Lys-28. Residue Lys-28 forms a Glycyl lysine isopeptide (Lys-Gly) (interchain with G-Cter in SUMO2); alternate linkage. A Glycyl lysine isopeptide (Lys-Gly) (interchain with G-Cter in ubiquitin); alternate cross-link involves residue Lys-28. Residues Lys-44 and Lys-76 each carry the N6-acetyllysine modification. Ser-77 carries the post-translational modification Phosphoserine. Lys-82 is subject to N6-acetyllysine; alternate. Residue Lys-82 forms a Glycyl lysine isopeptide (Lys-Gly) (interchain with G-Cter in SUMO2); alternate linkage. At Thr-93 the chain carries Phosphothreonine. Asn-108 carries N-linked (GlcNAc...) asparagine glycosylation. N6-acetyllysine occurs at positions 125, 131, and 133.

The protein belongs to the cyclophilin-type PPIase family. PPIase A subfamily. Interacts with protein phosphatase PPP3CA/calcineurin A. Interacts with isoform 2 of BSG/CD147. Interacts with FOXO1; the interaction promotes FOXO1 dephosphorylation, nuclear accumulation and transcriptional activity. Interacts with integrin ITGA2B:ITGB3; the interaction is ROS and peptidyl-prolyl cis-trans isomerase (PPIase) activity-dependent and is increased in the presence of thrombin. Interacts with MAP3K5. Interacts with TARDBP; the interaction is dependent on the RNA-binding activity of TARDBP and the PPIase activity of PPIA/CYPA and the acetylation of PPIA/CYPA at Lys-125 favors the interaction. Interacts with HNRNPA1, HNRNPA2B1, HNRNPC, RBMX, HNRNPK and HNRNPM. Post-translationally, acetylation at Lys-125 markedly inhibits catalysis of cis to trans isomerization. PPIA acetylation also antagonizes the immunosuppressive effects of cyclosporine by inhibiting the sequential steps of cyclosporine binding and calcineurin inhibition. Acetylation at Lys-125 favors the interaction with TARDBP.

The protein resides in the cytoplasm. It is found in the secreted. It localises to the nucleus. The catalysed reaction is [protein]-peptidylproline (omega=180) = [protein]-peptidylproline (omega=0). Its activity is regulated as follows. Binds cyclosporin A (CsA). CsA mediates some of its effects via an inhibitory action on PPIase. Catalyzes the cis-trans isomerization of proline imidic peptide bonds in oligopeptides. Exerts a strong chemotactic effect on leukocytes partly through activation of one of its membrane receptors BSG/CD147, initiating a signaling cascade that culminates in MAPK/ERK activation. Activates endothelial cells (ECs) in a proinflammatory manner by stimulating activation of NF-kappa-B and ERK, JNK and p38 MAP-kinases and by inducing expression of adhesion molecules including SELE and VCAM1. Induces apoptosis in ECs by promoting the FOXO1-dependent expression of CCL2 and BCL2L11 which are involved in EC chemotaxis and apoptosis. In response to oxidative stress, initiates proapoptotic and antiapoptotic signaling in ECs via activation of NF-kappa-B and AKT1 and up-regulation of antiapoptotic protein BCL2. Negatively regulates MAP3K5/ASK1 kinase activity, autophosphorylation and oxidative stress-induced apoptosis mediated by MAP3K5/ASK1. Necessary for the assembly of TARDBP in heterogeneous nuclear ribonucleoprotein (hnRNP) complexes and regulates TARDBP binding to RNA UG repeats and TARDBP-dependent expression of HDAC6, ATG7 and VCP which are involved in clearance of protein aggregates. Plays an important role in platelet activation and aggregation. Regulates calcium mobilization and integrin ITGA2B:ITGB3 bidirectional signaling via increased ROS production as well as by facilitating the interaction between integrin and the cell cytoskeleton. Binds heparan sulfate glycosaminoglycans. The protein is Peptidyl-prolyl cis-trans isomerase A (Ppia) of Rattus norvegicus (Rat).